We begin with the raw amino-acid sequence, 161 residues long: Phosphopantetheine adenylyltransferase (161 aa).

Ser11 is a binding site for substrate. ATP is bound by residues Ser11–Phe12 and His19. Substrate is bound by residues Lys43, Leu75, and Arg89. Residues Gly90–Arg92, Glu100, and Tyr125–Ser131 each bind ATP.

It belongs to the bacterial CoaD family. As to quaternary structure, homohexamer. The cofactor is Mg(2+).

The protein localises to the cytoplasm. It catalyses the reaction (R)-4'-phosphopantetheine + ATP + H(+) = 3'-dephospho-CoA + diphosphate. It participates in cofactor biosynthesis; coenzyme A biosynthesis; CoA from (R)-pantothenate: step 4/5. Its function is as follows. Reversibly transfers an adenylyl group from ATP to 4'-phosphopantetheine, yielding dephospho-CoA (dPCoA) and pyrophosphate. The polypeptide is Phosphopantetheine adenylyltransferase (Staphylococcus carnosus (strain TM300)).